We begin with the raw amino-acid sequence, 362 residues long: METTVKKQKKNLETKKPSIYSLQLHEMQDWLKEQGEPKFRAGQIFDWLYKKRVKNYEDMSNLAKGLRDKLSNSFDITTLNTLVKQTSSDGTIKFLFQLYDGYSIETVLMRHEYGNSICVTTQVGCRIGCTFCASTLGGLKRNLEAGEIVAQVVEVQRALDETEERVSSLVVMGIGEPFDNYDNLMSFLRIVNHEKGIHIGARHMTVSTSGIVPKIYKFAEEDMQINFAISLHAANTEIRSKLMPINRAYKLPDLMEAVKYYVNRTGRRITFEYGLFGGENDQVEHAEELAALLKGVKCHVNLIPVNYVPERDYVRTPREQIFLFEKTLKDRGVNVTIRREQGHDIDAACGQLRAKERKEETR.

Glutamate 105 acts as the Proton acceptor in catalysis. In terms of domain architecture, Radical SAM core spans 111 to 344 (HEYGNSICVT…VTIRREQGHD (234 aa)). An intrachain disulfide couples cysteine 118 to cysteine 349. The [4Fe-4S] cluster site is built by cysteine 125, cysteine 129, and cysteine 132. S-adenosyl-L-methionine contacts are provided by residues 175–176 (GE), serine 207, 230–232 (SLH), and asparagine 306. Cysteine 349 (S-methylcysteine intermediate) is an active-site residue.

Belongs to the radical SAM superfamily. RlmN family. It depends on [4Fe-4S] cluster as a cofactor.

Its subcellular location is the cytoplasm. It carries out the reaction adenosine(2503) in 23S rRNA + 2 reduced [2Fe-2S]-[ferredoxin] + 2 S-adenosyl-L-methionine = 2-methyladenosine(2503) in 23S rRNA + 5'-deoxyadenosine + L-methionine + 2 oxidized [2Fe-2S]-[ferredoxin] + S-adenosyl-L-homocysteine. It catalyses the reaction adenosine(37) in tRNA + 2 reduced [2Fe-2S]-[ferredoxin] + 2 S-adenosyl-L-methionine = 2-methyladenosine(37) in tRNA + 5'-deoxyadenosine + L-methionine + 2 oxidized [2Fe-2S]-[ferredoxin] + S-adenosyl-L-homocysteine. Specifically methylates position 2 of adenine 2503 in 23S rRNA and position 2 of adenine 37 in tRNAs. The polypeptide is Probable dual-specificity RNA methyltransferase RlmN (Bacillus mycoides (strain KBAB4) (Bacillus weihenstephanensis)).